The primary structure comprises 275 residues: 3-methyl-2-oxobutanoate hydroxymethyltransferase (275 aa).

Positions 44 and 83 each coordinate Mg(2+). 3-methyl-2-oxobutanoate contacts are provided by residues 44 to 45, D83, and K113; that span reads DS. E115 lines the Mg(2+) pocket. E182 acts as the Proton acceptor in catalysis.

The protein belongs to the PanB family. Homodecamer; pentamer of dimers. It depends on Mg(2+) as a cofactor.

The protein localises to the cytoplasm. It carries out the reaction 3-methyl-2-oxobutanoate + (6R)-5,10-methylene-5,6,7,8-tetrahydrofolate + H2O = 2-dehydropantoate + (6S)-5,6,7,8-tetrahydrofolate. It participates in cofactor biosynthesis; (R)-pantothenate biosynthesis; (R)-pantoate from 3-methyl-2-oxobutanoate: step 1/2. Catalyzes the reversible reaction in which hydroxymethyl group from 5,10-methylenetetrahydrofolate is transferred onto alpha-ketoisovalerate to form ketopantoate. This Clostridium botulinum (strain Kyoto / Type A2) protein is 3-methyl-2-oxobutanoate hydroxymethyltransferase.